The chain runs to 51 residues: Large ribosomal subunit protein eL39 (51 aa).

This sequence belongs to the eukaryotic ribosomal protein eL39 family.

The chain is Large ribosomal subunit protein eL39 from Sulfurisphaera tokodaii (strain DSM 16993 / JCM 10545 / NBRC 100140 / 7) (Sulfolobus tokodaii).